A 188-amino-acid polypeptide reads, in one-letter code: Pyridoxal 5'-phosphate synthase subunit PdxT (188 aa).

47–49 (GES) contacts L-glutamine. The Nucleophile role is filled by Cys79. L-glutamine contacts are provided by residues Arg105 and 134 to 135 (IR). Catalysis depends on charge relay system residues His170 and Glu172.

It belongs to the glutaminase PdxT/SNO family. In terms of assembly, in the presence of PdxS, forms a dodecamer of heterodimers. Only shows activity in the heterodimer.

It catalyses the reaction aldehydo-D-ribose 5-phosphate + D-glyceraldehyde 3-phosphate + L-glutamine = pyridoxal 5'-phosphate + L-glutamate + phosphate + 3 H2O + H(+). The catalysed reaction is L-glutamine + H2O = L-glutamate + NH4(+). It participates in cofactor biosynthesis; pyridoxal 5'-phosphate biosynthesis. Its function is as follows. Catalyzes the hydrolysis of glutamine to glutamate and ammonia as part of the biosynthesis of pyridoxal 5'-phosphate. The resulting ammonia molecule is channeled to the active site of PdxS. The sequence is that of Pyridoxal 5'-phosphate synthase subunit PdxT from Listeria monocytogenes serovar 1/2a (strain ATCC BAA-679 / EGD-e).